Reading from the N-terminus, the 94-residue chain is MIKSELVQKIAEANPHLYQRDVENIVNAILEQVASALERGDRVELRGFGAFSVKKRDARVGRNPRTGKQVDVSEKTVPYFKTGKEMRERLNTGK.

This sequence belongs to the bacterial histone-like protein family. Heterodimer of an alpha and a beta chain.

Its function is as follows. This protein is one of the two subunits of integration host factor, a specific DNA-binding protein that functions in genetic recombination as well as in transcriptional and translational control. The polypeptide is Integration host factor subunit beta (Xanthobacter autotrophicus (strain ATCC BAA-1158 / Py2)).